A 188-amino-acid chain; its full sequence is ADP-ribosylation factor J (188 aa).

GTP-binding positions include 34–40 (DGAGKST), 75–79 (DVGGQ), and 134–137 (NKQD).

Belongs to the small GTPase superfamily. Arf family.

It is found in the golgi apparatus. Its function is as follows. GTP-binding protein that may be involved in protein trafficking. May modulate vesicle budding and uncoating within the Golgi apparatus. The chain is ADP-ribosylation factor J (arrJ) from Dictyostelium discoideum (Social amoeba).